Consider the following 136-residue polypeptide: Protein NrdI (136 aa).

The protein belongs to the NrdI family.

Probably involved in ribonucleotide reductase function. The sequence is that of Protein NrdI from Salmonella arizonae (strain ATCC BAA-731 / CDC346-86 / RSK2980).